The chain runs to 125 residues: Large ribosomal subunit protein bL12 (125 aa).

Homodimer. Part of the ribosomal stalk of the 50S ribosomal subunit. Forms a multimeric L10(L12)X complex, where L10 forms an elongated spine to which 2 to 4 L12 dimers bind in a sequential fashion. Binds GTP-bound translation factors. Two isoforms seem to exist. One is probably dimethylated on Lys-69 and monomethylated on Lys-86 while the other is probably acetylated or trimethylated on both Lys-86 and Lys-89.

Its function is as follows. Forms part of the ribosomal stalk which helps the ribosome interact with GTP-bound translation factors. Is thus essential for accurate translation. This is Large ribosomal subunit protein bL12 from Rhodopseudomonas palustris (strain ATCC BAA-98 / CGA009).